The primary structure comprises 393 residues: Elongation factor Tu (393 aa).

The tr-type G domain maps to 10–203; it reads KPHVNIGTIG…AVDDYIPEPV (194 aa). A G1 region spans residues 19–26; the sequence is GHVDHGKT. 19–26 provides a ligand contact to GTP; sequence GHVDHGKT. Thr26 serves as a coordination point for Mg(2+). Residues 60–64 form a G2 region; that stretch reads GITIS. The interval 81–84 is G3; the sequence is DCPG. Residues 81-85 and 136-139 each bind GTP; these read DCPGH and NKVD. Positions 136 to 139 are G4; that stretch reads NKVD. The interval 173–175 is G5; that stretch reads SAL.

It belongs to the TRAFAC class translation factor GTPase superfamily. Classic translation factor GTPase family. EF-Tu/EF-1A subfamily. Monomer.

The protein localises to the cytoplasm. It catalyses the reaction GTP + H2O = GDP + phosphate + H(+). GTP hydrolase that promotes the GTP-dependent binding of aminoacyl-tRNA to the A-site of ribosomes during protein biosynthesis. This Chlorobaculum parvum (strain DSM 263 / NCIMB 8327) (Chlorobium vibrioforme subsp. thiosulfatophilum) protein is Elongation factor Tu.